The following is a 420-amino-acid chain: Probable 3-isopropylmalate dehydratase large subunit (420 aa).

The [4Fe-4S] cluster site is built by C301, C361, and C364.

This sequence belongs to the aconitase/IPM isomerase family. LeuC type 2 subfamily. Heterodimer of LeuC and LeuD. [4Fe-4S] cluster serves as cofactor.

The enzyme catalyses (2R,3S)-3-isopropylmalate = (2S)-2-isopropylmalate. It functions in the pathway amino-acid biosynthesis; L-leucine biosynthesis; L-leucine from 3-methyl-2-oxobutanoate: step 2/4. Its function is as follows. Catalyzes the isomerization between 2-isopropylmalate and 3-isopropylmalate, via the formation of 2-isopropylmaleate. This chain is Probable 3-isopropylmalate dehydratase large subunit, found in Methanosarcina mazei (strain ATCC BAA-159 / DSM 3647 / Goe1 / Go1 / JCM 11833 / OCM 88) (Methanosarcina frisia).